We begin with the raw amino-acid sequence, 492 residues long: 2-succinylbenzoate--CoA ligase (492 aa).

It belongs to the ATP-dependent AMP-binding enzyme family. MenE subfamily.

It catalyses the reaction 2-succinylbenzoate + ATP + CoA = 2-succinylbenzoyl-CoA + AMP + diphosphate. It participates in quinol/quinone metabolism; 1,4-dihydroxy-2-naphthoate biosynthesis; 1,4-dihydroxy-2-naphthoate from chorismate: step 5/7. It functions in the pathway quinol/quinone metabolism; menaquinone biosynthesis. In terms of biological role, converts 2-succinylbenzoate (OSB) to 2-succinylbenzoyl-CoA (OSB-CoA). The sequence is that of 2-succinylbenzoate--CoA ligase from Staphylococcus aureus (strain MRSA252).